Here is a 643-residue protein sequence, read N- to C-terminus: ATP-dependent RNA helicase DeaD (643 aa).

Positions 6-34 (TTFADLGLKAPILEALTDLGYEKPSPIQA) match the Q motif motif. The region spanning 37–208 (IPHLLDGRDV…RRFMKEPQEV (172 aa)) is the Helicase ATP-binding domain. 50–57 (AQTGSGKT) contacts ATP. The short motif at 156–159 (DEAD) is the DEAD box element. The 148-residue stretch at 232 to 379 (KNEALVRFLE…EVELPNAELL (148 aa)) folds into the Helicase C-terminal domain. Disordered stretches follow at residues 440–482 (VPPV…KRER) and 557–643 (MNMQ…GGDA). Composition is skewed to basic and acidic residues over residues 448–482 (PRRE…KRER) and 567–643 (PRTE…GGDA).

It belongs to the DEAD box helicase family. DeaD/CsdA subfamily.

Its subcellular location is the cytoplasm. It catalyses the reaction ATP + H2O = ADP + phosphate + H(+). In terms of biological role, DEAD-box RNA helicase involved in various cellular processes at low temperature, including ribosome biogenesis, mRNA degradation and translation initiation. The sequence is that of ATP-dependent RNA helicase DeaD from Klebsiella pneumoniae.